We begin with the raw amino-acid sequence, 337 residues long: Anthranilate phosphoribosyltransferase (337 aa).

5-phospho-alpha-D-ribose 1-diphosphate is bound by residues Gly81, 84–85 (GD), Ser89, 91–94 (NVST), 109–117 (KHGNRAMSS), and Ala121. Gly81 lines the anthranilate pocket. Ser93 lines the Mg(2+) pocket. Asn112 is a binding site for anthranilate. An anthranilate-binding site is contributed by Arg167. Mg(2+) is bound by residues Asp226 and Glu227.

The protein belongs to the anthranilate phosphoribosyltransferase family. In terms of assembly, homodimer. It depends on Mg(2+) as a cofactor.

The catalysed reaction is N-(5-phospho-beta-D-ribosyl)anthranilate + diphosphate = 5-phospho-alpha-D-ribose 1-diphosphate + anthranilate. It functions in the pathway amino-acid biosynthesis; L-tryptophan biosynthesis; L-tryptophan from chorismate: step 2/5. Functionally, catalyzes the transfer of the phosphoribosyl group of 5-phosphorylribose-1-pyrophosphate (PRPP) to anthranilate to yield N-(5'-phosphoribosyl)-anthranilate (PRA). The chain is Anthranilate phosphoribosyltransferase from Afipia carboxidovorans (strain ATCC 49405 / DSM 1227 / KCTC 32145 / OM5) (Oligotropha carboxidovorans).